Here is a 218-residue protein sequence, read N- to C-terminus: Claudin-5 (218 aa).

The Cytoplasmic segment spans residues 1-7; the sequence is MGSAALE. The chain crosses the membrane as a helical span at residues 8–28; the sequence is ILGLVLCLVGWGGLILACGLP. Topologically, residues 29–81 are extracellular; it reads MWQVTAFLDHNIVTAQTTWKGLWMSCVVQSTGHMQCKVYDSVLALSTEVQAAR. Residues 82-102 form a helical membrane-spanning segment; it reads ALTVSAVLLAFVALFVTLAGA. The Cytoplasmic portion of the chain corresponds to 103 to 122; it reads QCTTCVAPGPAKARVALTGG. A helical membrane pass occupies residues 123 to 143; that stretch reads VLYLFCGLLALVPLCWFANIV. Topologically, residues 144-159 are extracellular; sequence VREFYDPSVPVSQKYE. A helical transmembrane segment spans residues 160–180; that stretch reads LGAALYIGWAATALLMVGGCL. At 181–218 the chain is on the cytoplasmic side; that stretch reads LCCGAWVCTGRPDLSFPVKYSAPRRPTATGDYDKKNYV. The segment at 217-218 is interactions with TJP1, TJP2 and TJP3; it reads YV.

The protein belongs to the claudin family. In terms of assembly, directly interacts with TJP1/ZO-1, TJP2/ZO-2 and TJP3/ZO-3. Interacts with MPDZ.

Its subcellular location is the cell junction. It localises to the tight junction. The protein localises to the cell membrane. Its function is as follows. Plays a major role in tight junction-specific obliteration of the intercellular space. This chain is Claudin-5 (CLDN5), found in Homo sapiens (Human).